Reading from the N-terminus, the 197-residue chain is A-kinase anchor protein 14 (197 aa).

2 stretches are compositionally biased toward polar residues: residues 1 to 11 (MSETQNSTSQK) and 19 to 29 (AASQTMPNTQD). The segment at 1–29 (MSETQNSTSQKAMDEDNKAASQTMPNTQD) is disordered. An RII-binding region spans residues 35-52 (ELTQVALALVEDVINYAV).

Binds to type II regulatory subunits (RII). In terms of tissue distribution, present in cilia (at protein level). Expressed in tissues containing axoneme-based organelles (cilia and/or flagella): trachea and testis. Highly expressed in airway cilia.

Its subcellular location is the cytoplasm. In terms of biological role, binds to type II regulatory subunits of protein kinase A and anchors/targets them. This chain is A-kinase anchor protein 14 (AKAP14), found in Homo sapiens (Human).